We begin with the raw amino-acid sequence, 948 residues long: ELKS/Rab6-interacting/CAST family member 1 (948 aa).

The disordered stretch occupies residues 1 to 54 (MYGSARSVGKVEPSSQSPGRSPRLPRSPRLGHRRTNSTGGSSGNSVGGGSGKTL). Lys-10 carries the N6-acetyllysine modification. The span at 13 to 28 (PSSQSPGRSPRLPRSP) shows a compositional bias: low complexity. Phosphoserine occurs at positions 17, 21, and 37. At Thr-38 the chain carries Phosphothreonine. The span at 40-51 (GSSGNSVGGGSG) shows a compositional bias: gly residues. Ser-55, Ser-75, Ser-94, Ser-796, and Ser-937 each carry phosphoserine. A coiled-coil region spans residues 144 to 920 (RQARDNTIMD…RMKLMADNYE (777 aa)). Residues 773 to 796 (KHKEQVEKKKSAQMLEEARRREDS) are compositionally biased toward basic and acidic residues. Disordered regions lie at residues 773–801 (KHKEQVEKKKSAQMLEEARRREDSLSDSS) and 903–948 (QLKQ…GIWA). The span at 939-948 (DQDEEEGIWA) shows a compositional bias: acidic residues.

As to quaternary structure, interacts with the GTB-bound forms of RAB6A isoform 1 and isoform 2 and with RAB6B. The interaction was strongest with RAB6B, followed by RAB6A isoform 2 and weakest with RAB6A isoform 1. Part of a complex with CHUK, IKBKB and IKBKG. Interacts with CHUK, IKBKB and IKBKG. The interaction with IKBKG is independent of CHUK and IKBKB. Interacts with NFKBIA. Isoform 1 interacts through its C-terminus with the PDZ domains of RIMS1 and RIMS2. Interacts with ERC2/CAST1. Interacts with SDCCAG8. Part of a cortical microtubule stabilization complex (CMSC) composed of KANK1, PPFIA1, PPFIBP1, ERC1/ELKS, PHLDB2/LL5beta, CLASPs, KIF21A and possibly additional interactors; within CMSCs KANK1 and PHLDB2/LL5beta appear to be the core components for targeting of microtubule-binding proteins KIF21A and CLASPs, whereas PPFIA1, PPFIBP1 and ERC1/ELKS serve as scaffolds for protein clustering. Isoform 1 is specifically expressed in brain. A further probable isoform is widely expressed outside of brain It is referred to as ERC1a by PubMed:12391317 and characterized by a C-terminus identical to that of isoforms 1 in human and mouse.

The protein localises to the cytoplasm. Its subcellular location is the cytoskeleton. It is found in the microtubule organizing center. The protein resides in the centrosome. It localises to the membrane. The protein localises to the golgi apparatus membrane. Its subcellular location is the presynaptic active zone. It is found in the cell projection. The protein resides in the podosome. Functionally, regulatory subunit of the IKK complex. Probably recruits IkappaBalpha/NFKBIA to the complex. May be involved in the organization of the cytomatrix at the nerve terminals active zone (CAZ) which regulates neurotransmitter release. May be involved in vesicle trafficking at the CAZ. May be involved in Rab-6 regulated endosomes to Golgi transport. This chain is ELKS/Rab6-interacting/CAST family member 1 (Erc1), found in Rattus norvegicus (Rat).